Reading from the N-terminus, the 119-residue chain is Large ribosomal subunit protein bL20 (119 aa).

The protein belongs to the bacterial ribosomal protein bL20 family.

Binds directly to 23S ribosomal RNA and is necessary for the in vitro assembly process of the 50S ribosomal subunit. It is not involved in the protein synthesizing functions of that subunit. The protein is Large ribosomal subunit protein bL20 of Brevibacillus brevis (strain 47 / JCM 6285 / NBRC 100599).